The primary structure comprises 482 residues: ATP synthase subunit beta (482 aa).

161–168 (GGAGVGKT) contributes to the ATP binding site.

Belongs to the ATPase alpha/beta chains family. F-type ATPases have 2 components, CF(1) - the catalytic core - and CF(0) - the membrane proton channel. CF(1) has five subunits: alpha(3), beta(3), gamma(1), delta(1), epsilon(1). CF(0) has four main subunits: a(1), b(1), b'(1) and c(9-12).

The protein resides in the cellular thylakoid membrane. It catalyses the reaction ATP + H2O + 4 H(+)(in) = ADP + phosphate + 5 H(+)(out). In terms of biological role, produces ATP from ADP in the presence of a proton gradient across the membrane. The catalytic sites are hosted primarily by the beta subunits. The sequence is that of ATP synthase subunit beta from Microcystis aeruginosa (strain NIES-843 / IAM M-2473).